The sequence spans 325 residues: tRNA(Ile)-lysidine synthase (325 aa).

An ATP-binding site is contributed by 34–39 (SGGADS).

Belongs to the tRNA(Ile)-lysidine synthase family.

It is found in the cytoplasm. The catalysed reaction is cytidine(34) in tRNA(Ile2) + L-lysine + ATP = lysidine(34) in tRNA(Ile2) + AMP + diphosphate + H(+). Ligates lysine onto the cytidine present at position 34 of the AUA codon-specific tRNA(Ile) that contains the anticodon CAU, in an ATP-dependent manner. Cytidine is converted to lysidine, thus changing the amino acid specificity of the tRNA from methionine to isoleucine. The polypeptide is tRNA(Ile)-lysidine synthase (Rhodococcus opacus (strain B4)).